The sequence spans 1024 residues: PH and SEC7 domain-containing protein 1 (1024 aa).

The segment at C67–A96 is disordered. A compositionally biased stretch (pro residues) spans R71–G95. 2 positions are modified to phosphoserine: S126 and S156. Disordered regions lie at residues S154–G195, P250–G277, R307–S401, and P434–T536. A compositionally biased stretch (acidic residues) spans N348–E365. The span at P445–P463 shows a compositional bias: pro residues. A compositionally biased stretch (basic and acidic residues) spans P495–D507. Residues G512 to E706 enclose the SEC7 domain. At S720 the chain carries Phosphoserine. The region spanning A756–A869 is the PH domain. Coiled coils occupy residues L898 to A924 and A956 to T983. Positions A976 to P1024 are disordered.

This sequence belongs to the PSD family. In terms of assembly, interacts with ACTN1. Interacts (ARF6-bound form) with KCNK1; does not interact with KCNK1 in the absence of ARF6. In terms of tissue distribution, highest expression detected in brain and some expression detected also in uterus, stomach, ovary and intestine, with isoform 2 being expressed at the highest levels. In the brain, isoform 1 is highly expressed in the strata oriens, radiatum, lacunosum-moleculare of the hippocampal CA1-3 regions and the dentate molecular layer of the hippocampal formation, with lower levels detected in the neuronal cell layers and the stratum lucidum (at protein level). Not detected in tongue, thymus, spleen, lung, heart, liver and kidney.

Its subcellular location is the cell membrane. It is found in the cell projection. The protein localises to the ruffle. The protein resides in the ruffle membrane. It localises to the cleavage furrow. Functionally, guanine nucleotide exchange factor for ARF6. Isoform 2 and isoform 3 induce cytoskeletal remodeling, but lead to distinct morphological changes in HeLa cells: isoform 2 induces cell elongation and formation of actin-rich protrusions, whereas isoform 3 promotes the formation of membrane ruffles and loss of stress fibers. The sequence is that of PH and SEC7 domain-containing protein 1 (Psd) from Mus musculus (Mouse).